Consider the following 458-residue polypeptide: NALCN channel auxiliary factor 1 (458 aa).

Residues 40–60 form a helical membrane-spanning segment; it reads LSLASLLFFTVLLSDHLWFCA. Residues 70–155 are disordered; it reads KEHQQQQRQQ…NRGKDDRGKA (86 aa). Over residues 75 to 96 the composition is skewed to low complexity; that stretch reads QQRQQQQQQQQQRQRQQQQQQR. Positions 136–145 are enriched in gly residues; sequence GDGGGGGGKG. 7 cysteine pairs are disulfide-bonded: Cys-191–Cys-261, Cys-226–Cys-313, Cys-246–Cys-261, Cys-304–Cys-341, Cys-324–Cys-377, Cys-330–Cys-376, and Cys-334–Cys-361. N-linked (GlcNAc...) asparagine glycosylation occurs at Asn-217. Residues 417–437 traverse the membrane as a helical segment; it reads LKLCVLVLILLHTVLTASAAQ.

It belongs to the NALF family. Component of the NALCN channel complex. NALCN complex consists of NALCN and auxiliary subunits, UNC79, UNC80 and NACL1. These auxiliary subunits are essential for the NALCN channel function.

The protein resides in the cell membrane. Its function is as follows. Auxillary component of the NALCN sodium channel complex, a channel that regulates the resting membrane potential and controls neuronal excitability. The sequence is that of NALCN channel auxiliary factor 1 from Homo sapiens (Human).